An 82-amino-acid chain; its full sequence is Sulfur carrier protein TusA (82 aa).

The Cysteine persulfide intermediate role is filled by Cys19.

Belongs to the sulfur carrier protein TusA family.

Its subcellular location is the cytoplasm. In terms of biological role, sulfur carrier protein which probably makes part of a sulfur-relay system. This Vibrio campbellii (strain ATCC BAA-1116) protein is Sulfur carrier protein TusA.